Consider the following 199-residue polypeptide: Ras-related and estrogen-regulated growth inhibitor (199 aa).

GTP-binding positions include 13–20, 60–64, and 118–121; these read GRAGVGKS, DTAGQ, and NKAD.

This sequence belongs to the small GTPase superfamily. Ras family. As to expression, detected in heart, brain, placenta, lung, liver, skin, kidney and pancreas. Detected in estrogen receptor-positive breast-derived cell lines, but not in estrogen receptor-negative cell lines. Expression is decreased or lost in a significant proportion of primary breast tumors with poor clinical prognosis.

It localises to the cytoplasm. The catalysed reaction is GTP + H2O = GDP + phosphate + H(+). Its function is as follows. Binds GDP/GTP and possesses intrinsic GTPase activity. Has higher affinity for GDP than for GTP. In cell lines overexpression leads to a reduction in the rate of proliferation, colony formation and in tumorigenic potential. The polypeptide is Ras-related and estrogen-regulated growth inhibitor (RERG) (Homo sapiens (Human)).